A 447-amino-acid chain; its full sequence is Argininosuccinate synthase (447 aa).

Residues Ala-17–Ser-25 and Ala-43 each bind ATP. Position 99 (Tyr-99) interacts with L-citrulline. The ATP site is built by Gly-129 and Thr-131. Residues Thr-131, Asn-135, and Asp-136 each contribute to the L-aspartate site. Asn-135 is a binding site for L-citrulline. Asp-136 contributes to the ATP binding site. 2 residues coordinate L-citrulline: Arg-139 and Ser-192. Asp-194 is a binding site for ATP. Positions 201, 203, and 280 each coordinate L-citrulline.

The protein belongs to the argininosuccinate synthase family. Type 2 subfamily. As to quaternary structure, homotetramer.

Its subcellular location is the cytoplasm. The enzyme catalyses L-citrulline + L-aspartate + ATP = 2-(N(omega)-L-arginino)succinate + AMP + diphosphate + H(+). Its pathway is amino-acid biosynthesis; L-arginine biosynthesis; L-arginine from L-ornithine and carbamoyl phosphate: step 2/3. This chain is Argininosuccinate synthase, found in Klebsiella pneumoniae (strain 342).